A 213-amino-acid chain; its full sequence is Cytochrome b-c1 complex subunit Rieske, mitochondrial (213 aa).

The N-terminal 29 residues, 1 to 29 (MSSLAFRTLRNGLGLKSSVRALSTTTTTL), are a transit peptide targeting the mitochondrion. The Mitochondrial matrix segment spans residues 30-47 (SNYQQPDYSSYLNNKSGQ). Residues 48–77 (GSRNFTYFMVGSMGLLSAAGAKSTVEAFLS) form a helical membrane-spanning segment. At 78–213 (SFAASADVLA…FTDDETLLVG (136 aa)) the chain is on the mitochondrial intermembrane side. The Rieske domain occupies 116-211 (RHRTADEIEE…YDFTDDETLL (96 aa)). Residues Cys156, His158, Cys175, and His178 each contribute to the [2Fe-2S] cluster site. Residues Cys161 and Cys177 are joined by a disulfide bond.

Belongs to the Rieske iron-sulfur protein family. As to quaternary structure, component of the ubiquinol-cytochrome c oxidoreductase (cytochrome b-c1 complex, complex III, CIII), a multisubunit enzyme composed of 10 subunits. The complex is composed of 3 respiratory subunits cytochrome b (COB), cytochrome c1 (CYT1) and Rieske protein (RIP1), 2 core protein subunits COR1 and QCR2, and 5 low-molecular weight protein subunits QCR6, QCR7, QCR8, QCR9 and QCR10. The complex exists as an obligatory dimer and forms supercomplexes (SCs) in the inner mitochondrial membrane with a monomer or a dimer of cytochrome c oxidase (complex IV, CIV), resulting in 2 different assemblies (supercomplexes III(2)IV and III(2)IV(2)). It depends on [2Fe-2S] cluster as a cofactor.

The protein resides in the mitochondrion inner membrane. It catalyses the reaction a quinol + 2 Fe(III)-[cytochrome c](out) = a quinone + 2 Fe(II)-[cytochrome c](out) + 2 H(+)(out). In terms of biological role, component of the ubiquinol-cytochrome c oxidoreductase, a multisubunit transmembrane complex that is part of the mitochondrial electron transport chain which drives oxidative phosphorylation. The complex plays an important role in the uptake of multiple carbon sources present in different host niches. The sequence is that of Cytochrome b-c1 complex subunit Rieske, mitochondrial from Candida albicans (strain SC5314 / ATCC MYA-2876) (Yeast).